Reading from the N-terminus, the 209-residue chain is Uracil phosphoribosyltransferase (209 aa).

Residues R79, R104, and D131–S139 contribute to the 5-phospho-alpha-D-ribose 1-diphosphate site. Uracil is bound by residues I194 and G199–A201. A 5-phospho-alpha-D-ribose 1-diphosphate-binding site is contributed by D200.

It belongs to the UPRTase family. It depends on Mg(2+) as a cofactor.

The enzyme catalyses UMP + diphosphate = 5-phospho-alpha-D-ribose 1-diphosphate + uracil. It participates in pyrimidine metabolism; UMP biosynthesis via salvage pathway; UMP from uracil: step 1/1. Its activity is regulated as follows. Allosterically activated by GTP. Functionally, catalyzes the conversion of uracil and 5-phospho-alpha-D-ribose 1-diphosphate (PRPP) to UMP and diphosphate. This chain is Uracil phosphoribosyltransferase, found in Lysinibacillus sphaericus (strain C3-41).